We begin with the raw amino-acid sequence, 960 residues long: RasGEF domain-containing serine/threonine-protein kinase X (960 aa).

The Protein kinase domain occupies 21 to 274; that stretch reads LEFNEKIGKG…FDEILSQLKV (254 aa). Residues 27–35 and lysine 48 each bind ATP; that span reads IGKGSFGSV. The active-site Proton acceptor is the aspartate 140. Low complexity predominate over residues 314-368; sequence NISFSPNNSNNNNNNNNNISNISPDITTGIQQINLSSSGGSNNSSPSTPPQGSQL. 2 disordered regions span residues 314–372 and 393–413; these read NISF…VSLA and GQLS…HKPS. The N-terminal Ras-GEF domain maps to 437 to 565; the sequence is PCYAALTSHI…LGTTISNNEL (129 aa). Positions 596-651 are disordered; that stretch reads NNNNNNNNNPVNNINNINNNNSVNSSSSNNNNNNNNNNSNNNNNNNNNNNNNNNNN. The 246-residue stretch at 712 to 957 folds into the Ras-GEF domain; sequence HSTELARQIT…KNNSLKCEPP (246 aa).

It belongs to the protein kinase superfamily. TKL Ser/Thr protein kinase family.

It catalyses the reaction L-seryl-[protein] + ATP = O-phospho-L-seryl-[protein] + ADP + H(+). The catalysed reaction is L-threonyl-[protein] + ATP = O-phospho-L-threonyl-[protein] + ADP + H(+). Functionally, promotes the exchange of Ras-bound GDP by GTP. In Dictyostelium discoideum (Social amoeba), this protein is RasGEF domain-containing serine/threonine-protein kinase X (gefX).